Reading from the N-terminus, the 132-residue chain is MVMTDPIADLLTRIRNANVVRHGVVELPSSKIKKAMANILLQEGYLKDIEEYNDGVVPMLRLSMKYGKGKERIVTGLKRISKPGLRVYCRKEEIPKVLNGLGIAIISTSKGIVTDKEARKLGLGGEVLCYVW.

The protein belongs to the universal ribosomal protein uS8 family. As to quaternary structure, part of the 30S ribosomal subunit. Contacts proteins S5 and S12.

In terms of biological role, one of the primary rRNA binding proteins, it binds directly to 16S rRNA central domain where it helps coordinate assembly of the platform of the 30S subunit. This Clostridium acetobutylicum (strain ATCC 824 / DSM 792 / JCM 1419 / IAM 19013 / LMG 5710 / NBRC 13948 / NRRL B-527 / VKM B-1787 / 2291 / W) protein is Small ribosomal subunit protein uS8.